We begin with the raw amino-acid sequence, 208 residues long: MIIKHFFGTVLVLLASTTIFSLDLKLIIFQQRQVNQESLKLLNKLQTLSIQQCLPHRKNFLLPQKSLSPQQYQKGHTLAILHEMLQQIFSLFRANISLDGWEENHTEKFLIQLHQQLEYLEALMGLEAEKLSGTLGSDNLRLQVKMYFRRIHDYLENQDYSTCAWAIVQVEISRCLFFVFSLTEKLSKQGRPLNDMKQELTTEFRSPR.

Positions 1–21 are cleaved as a signal peptide; that stretch reads MIIKHFFGTVLVLLASTTIFS. Residues cysteine 53 and cysteine 163 are joined by a disulfide bond. N-linked (GlcNAc...) asparagine glycosylation is found at asparagine 95 and asparagine 104.

It belongs to the alpha/beta interferon family. Endometrium-specific.

It is found in the secreted. Type I interferon required for maintaining basal levels of IFN-regulated genes, including 2'-5'-oligoadenylate synthetase, IRF7 and ISG15, in the female reproductive tract. Directly mediates protection against viral and bacterial genital infections. This chain is Interferon epsilon (IFNE), found in Homo sapiens (Human).